A 577-amino-acid chain; its full sequence is Acyl-coenzyme A synthetase ACSM2A, mitochondrial (577 aa).

A mitochondrion-targeting transit peptide spans Met-1–Phe-46. Gln-139 lines the CoA pocket. ATP contacts are provided by residues Thr-221–Lys-229, Glu-359–Thr-364, Asp-446, and Arg-461. Residue Thr-364 coordinates substrate. CoA is bound at residue Ser-469–Tyr-471. Residue Arg-472 coordinates substrate. A CoA-binding site is contributed by Arg-501. The residue at position 513 (Ser-513) is a Phosphoserine. Residues Lys-532 and Tyr-540–Arg-542 contribute to the CoA site. Lys-557 lines the ATP pocket.

Belongs to the ATP-dependent AMP-binding enzyme family. As to quaternary structure, monomer. The cofactor is Mg(2+). Requires Mn(2+) as cofactor.

It is found in the mitochondrion. The catalysed reaction is a medium-chain fatty acid + ATP + CoA = a medium-chain fatty acyl-CoA + AMP + diphosphate. It carries out the reaction benzoate + ATP + CoA = benzoyl-CoA + AMP + diphosphate. It catalyses the reaction hexanoate + ATP + CoA = hexanoyl-CoA + AMP + diphosphate. The enzyme catalyses butanoate + ATP + CoA = butanoyl-CoA + AMP + diphosphate. The catalysed reaction is octanoate + ATP + CoA = octanoyl-CoA + AMP + diphosphate. It carries out the reaction decanoate + ATP + CoA = decanoyl-CoA + AMP + diphosphate. Functionally, catalyzes the activation of fatty acids by CoA to produce an acyl-CoA, the first step in fatty acid metabolism. Capable of activating medium-chain fatty acids (e.g. butyric (C4) to decanoic (C10) acids), and certain carboxylate-containing xenobiotics, e.g. benzoate. The sequence is that of Acyl-coenzyme A synthetase ACSM2A, mitochondrial (ACSM2A) from Homo sapiens (Human).